A 152-amino-acid polypeptide reads, in one-letter code: 1,4-dihydroxy-2-naphthoyl-CoA hydrolase (152 aa).

D20 is an active-site residue.

The protein belongs to the 4-hydroxybenzoyl-CoA thioesterase family. DHNA-CoA hydrolase subfamily.

The enzyme catalyses 1,4-dihydroxy-2-naphthoyl-CoA + H2O = 1,4-dihydroxy-2-naphthoate + CoA + H(+). It functions in the pathway cofactor biosynthesis; phylloquinone biosynthesis. It participates in quinol/quinone metabolism; 1,4-dihydroxy-2-naphthoate biosynthesis; 1,4-dihydroxy-2-naphthoate from chorismate: step 7/7. Functionally, catalyzes the hydrolysis of 1,4-dihydroxy-2-naphthoyl-CoA (DHNA-CoA) to 1,4-dihydroxy-2-naphthoate (DHNA), a reaction involved in phylloquinone (vitamin K1) biosynthesis. The protein is 1,4-dihydroxy-2-naphthoyl-CoA hydrolase of Synechococcus sp. (strain CC9311).